The sequence spans 339 residues: 4-hydroxy-2-oxovalerate aldolase 3 (339 aa).

The 253-residue stretch at 7 to 259 (IRVTDTSLRD…KTGIDFFAIA (253 aa)) folds into the Pyruvate carboxyltransferase domain. 15–16 (RD) is a binding site for substrate. Mn(2+) is bound at residue D16. Catalysis depends on H19, which acts as the Proton acceptor. The substrate site is built by S169 and H198. Positions 198 and 200 each coordinate Mn(2+). Y289 is a binding site for substrate.

This sequence belongs to the 4-hydroxy-2-oxovalerate aldolase family.

It carries out the reaction (S)-4-hydroxy-2-oxopentanoate = acetaldehyde + pyruvate. This is 4-hydroxy-2-oxovalerate aldolase 3 from Rhodococcus opacus (strain B4).